A 200-amino-acid chain; its full sequence is Nascent polypeptide-associated complex subunit alpha (200 aa).

The span at 1 to 19 shows a compositional bias: basic and acidic residues; sequence MADPRIEELPDEETKKPTV. 2 disordered regions span residues 1-52 and 120-165; these read MADP…SRNE and QQLA…EDKD. Residues 20-34 are compositionally biased toward acidic residues; sequence EELDESSDEESDAEA. In terms of domain architecture, NAC-A/B spans 49-114; sequence SRNEKKARKA…AKIEDLNASA (66 aa). A compositionally biased stretch (basic and acidic residues) spans 127-143; it reads AEHDHAGHTHDHKHEAA. The segment covering 144–160 has biased composition (acidic residues); it reads KEEEEEEDDGEEVDAEG. The region spanning 161–200 is the UBA domain; the sequence is IEDKDIELVMTQANVSRKKAIKALKENDNDIVNSIMALSV.

This sequence belongs to the NAC-alpha family. In terms of assembly, part of the nascent polypeptide-associated complex (NAC), consisting of EGD2 and EGD1. NAC associates with ribosomes via EGD1.

It is found in the cytoplasm. Its subcellular location is the nucleus. Functionally, component of the nascent polypeptide-associated complex (NAC), a dynamic component of the ribosomal exit tunnel, protecting the emerging polypeptides from interaction with other cytoplasmic proteins to ensure appropriate nascent protein targeting. The NAC complex also promotes mitochondrial protein import by enhancing productive ribosome interactions with the outer mitochondrial membrane and blocks the inappropriate interaction of ribosomes translating non-secretory nascent polypeptides with translocation sites in the membrane of the endoplasmic reticulum. EGD2 may also be involved in transcription regulation. This is Nascent polypeptide-associated complex subunit alpha (EGD2) from Chaetomium globosum (strain ATCC 6205 / CBS 148.51 / DSM 1962 / NBRC 6347 / NRRL 1970) (Soil fungus).